The sequence spans 569 residues: Proline--tRNA ligase (569 aa).

It belongs to the class-II aminoacyl-tRNA synthetase family. ProS type 1 subfamily. Homodimer.

The protein resides in the cytoplasm. The catalysed reaction is tRNA(Pro) + L-proline + ATP = L-prolyl-tRNA(Pro) + AMP + diphosphate. Catalyzes the attachment of proline to tRNA(Pro) in a two-step reaction: proline is first activated by ATP to form Pro-AMP and then transferred to the acceptor end of tRNA(Pro). As ProRS can inadvertently accommodate and process non-cognate amino acids such as alanine and cysteine, to avoid such errors it has two additional distinct editing activities against alanine. One activity is designated as 'pretransfer' editing and involves the tRNA(Pro)-independent hydrolysis of activated Ala-AMP. The other activity is designated 'posttransfer' editing and involves deacylation of mischarged Ala-tRNA(Pro). The misacylated Cys-tRNA(Pro) is not edited by ProRS. The sequence is that of Proline--tRNA ligase from Endomicrobium trichonymphae.